A 585-amino-acid chain; its full sequence is Auxin response factor 17 (585 aa).

A DNA-binding region (TF-B3) is located at residues 119–221 (FAKILTPSDA…EMFIGVRRTP (103 aa)). Disordered stretches follow at residues 483-517 (EMMNFGSPPSDNLSPNSNTTNLSSGNDLVGNRGPL) and 535-585 (EHSE…SSQG). A compositionally biased stretch (low complexity) spans 488-510 (GSPPSDNLSPNSNTTNLSSGNDL). Polar residues predominate over residues 573–585 (KHSNSNAGSSSQG).

It belongs to the ARF family. Homo and heterodimers.

The protein resides in the nucleus. Its function is as follows. Auxin response factors (ARFs) are transcriptional factors that bind specifically to the DNA sequence 5'-TGTCTC-3' found in the auxin-responsive promoter elements (AuxREs). Could act as transcriptional activator or repressor. Formation of heterodimers with Aux/IAA proteins may alter their ability to modulate early auxin response genes expression. The protein is Auxin response factor 17 (ARF17) of Arabidopsis thaliana (Mouse-ear cress).